The primary structure comprises 223 residues: Probable 3-beta-hydroxysteroid-Delta(8),Delta(7)-isomerase (223 aa).

4 helical membrane-spanning segments follow: residues 28–48 (IVSI…LLFG), 58–78 (LMCW…YFVF), 115–135 (VEGI…YAIA), and 175–195 (FYYY…PSLI). Residues 54 to 196 (LDKLLMCWWT…WWVLIPSLIS (143 aa)) enclose the EXPERA domain.

It belongs to the EBP family.

It localises to the endoplasmic reticulum membrane. It catalyses the reaction lathosterol = 5alpha-cholest-8-en-3beta-ol. It functions in the pathway steroid biosynthesis; sterol biosynthesis. Functionally, catalyzes the conversion of Delta(8)-sterols to their corresponding Delta(7)-isomers. This chain is Probable 3-beta-hydroxysteroid-Delta(8),Delta(7)-isomerase, found in Arabidopsis thaliana (Mouse-ear cress).